Here is a 245-residue protein sequence, read N- to C-terminus: MTSSSPARPPVAAASTPSDAKVALGWLHTAKFLTTAPELKHLPRLDVPEIAFVGRSNAGKSTCINTLTQQHRLAFASKTPGRTQSINLFSLGKQGVTDAVLADLPGYGYAAVPKEAKYRWQQVMGNYLQTRDNLKAVVLLCDPRLGLTELDEILLDVLRPRVEEGLKFLVLLTKSDKLNKTEAAKALSIVRLQAGGGDVKLFSSLKRKGVEEVAQHLWDWAHPPEKPAKKPKAEPAAEAATGDEG.

The EngB-type G domain maps to 46–223; sequence DVPEIAFVGR…AQHLWDWAHP (178 aa). Residues 54 to 61, 81 to 85, 103 to 106, 173 to 176, and 202 to 204 each bind GTP; these read GRSNAGKS, GRTQS, DLPG, TKSD, and FSS. Mg(2+)-binding residues include Ser61 and Thr83. The segment at 219-245 is disordered; that stretch reads DWAHPPEKPAKKPKAEPAAEAATGDEG. Basic and acidic residues predominate over residues 222–235; sequence HPPEKPAKKPKAEP. Over residues 236–245 the composition is skewed to low complexity; sequence AAEAATGDEG.

It belongs to the TRAFAC class TrmE-Era-EngA-EngB-Septin-like GTPase superfamily. EngB GTPase family. The cofactor is Mg(2+).

In terms of biological role, necessary for normal cell division and for the maintenance of normal septation. This is Probable GTP-binding protein EngB from Polaromonas sp. (strain JS666 / ATCC BAA-500).